The primary structure comprises 88 residues: Small ribosomal subunit protein bS18 (88 aa).

The disordered stretch occupies residues 1-22; it reads MSTKNAKPKKEAQRRPSRKAKV.

It belongs to the bacterial ribosomal protein bS18 family. In terms of assembly, part of the 30S ribosomal subunit. Forms a tight heterodimer with protein bS6.

Binds as a heterodimer with protein bS6 to the central domain of the 16S rRNA, where it helps stabilize the platform of the 30S subunit. The chain is Small ribosomal subunit protein bS18 (rpsR) from Thermus thermophilus (strain ATCC BAA-163 / DSM 7039 / HB27).